The chain runs to 874 residues: Alanine--tRNA ligase (874 aa).

4 residues coordinate Zn(2+): H562, H566, C663, and H667.

The protein belongs to the class-II aminoacyl-tRNA synthetase family. Zn(2+) serves as cofactor.

It is found in the cytoplasm. It carries out the reaction tRNA(Ala) + L-alanine + ATP = L-alanyl-tRNA(Ala) + AMP + diphosphate. In terms of biological role, catalyzes the attachment of alanine to tRNA(Ala) in a two-step reaction: alanine is first activated by ATP to form Ala-AMP and then transferred to the acceptor end of tRNA(Ala). Also edits incorrectly charged Ser-tRNA(Ala) and Gly-tRNA(Ala) via its editing domain. The polypeptide is Alanine--tRNA ligase (Bordetella parapertussis (strain 12822 / ATCC BAA-587 / NCTC 13253)).